Consider the following 130-residue polypeptide: MVMTDNIADMLTRIRNANQMHHLQVVVPISKLKVEILKVLKEEGFIKNFFIKEFKREIIISLKYTIERERVIKGLKKISKPGLKVYTSVEKIPKVLSGLGIALISTNKGILTDNKARLEKVGGEVLAYIW.

This sequence belongs to the universal ribosomal protein uS8 family. As to quaternary structure, part of the 30S ribosomal subunit. Contacts proteins S5 and S12.

Its function is as follows. One of the primary rRNA binding proteins, it binds directly to 16S rRNA central domain where it helps coordinate assembly of the platform of the 30S subunit. This chain is Small ribosomal subunit protein uS8, found in Phytoplasma mali (strain AT).